Here is a 258-residue protein sequence, read N- to C-terminus: UPF0246 protein ABO_1338 (258 aa).

The protein belongs to the UPF0246 family.

This chain is UPF0246 protein ABO_1338, found in Alcanivorax borkumensis (strain ATCC 700651 / DSM 11573 / NCIMB 13689 / SK2).